The sequence spans 271 residues: Homeobox protein pal-1 (271 aa).

3 disordered regions span residues 1–25 (MSVD…TNVN), 100–135 (PPLS…ASSS), and 178–202 (GSAG…TNNV). Low complexity-rich tracts occupy residues 100 to 117 (PPLS…YPSP) and 125 to 135 (STSSGIGASSS). The span at 189–202 (DTKSLPTGPGTNNV) shows a compositional bias: polar residues. Positions 207–266 (ADKYRMVYSDYQRLELEKEFHTSAFITSDRKSQLSTMLSLTERQIKIWFQNRRAKDRRDK) form a DNA-binding region, homeobox.

It belongs to the Caudal homeobox family. Interacts with tir-1 and let-756.

The protein localises to the nucleus. It is found in the chromosome. Its subcellular location is the centromere. It localises to the kinetochore. Its function is as follows. Transcriptional activator. Interacts with promoter regions for tbx-8.9, tbx-9, elt-1, hnd-1, scrt-1, and vab-7 genes. Binds the sequence ATTTATGAC. Binds to the enhancer region of the hlh-1 gene promoter during embryonic body wall muscle development. Activates the gene for mab-5 in embryo development. Necessary for vab-7 expression in C blastomeres in the posterior of embryos. Required for posterior V6 neuroectoblast cell fate specification during postembryonic neurogenesis (patterning) which generates the characteristic ray lineage during male tail development. Binds to ced-3 promoter and activated expression which is crucial for tail-spike cell death. Has a role in E cell specification in endoderm development and body wall muscle development. The protein is Homeobox protein pal-1 of Caenorhabditis briggsae.